The chain runs to 257 residues: Gamma-secretase subunit APH-1B (257 aa).

7 helical membrane-spanning segments follow: residues 5–25 (VFFG…VFTI), 32–52 (IIFL…SSLV), 71–91 (LLIF…FAYY), 115–135 (LLAY…SFVN), 158–178 (YSAF…IVFF), 186–206 (WGIL…TFIS), and 213–233 (LASA…AAGG).

Belongs to the APH-1 family. Probable component of the gamma-secretase complex, a complex composed of a presenilin homodimer (PSEN1 or PSEN2), nicastrin (NCSTN), APH1 (APH1A or APH1B) and PEN2. Such minimal complex is sufficient for secretase activity, although other components may exist. Interacts with PSEN1 and PSEN2. Weakly or not expressed in leukocytes, lung, placenta, small intestine, liver, kidney, spleen thymus, colon, skeletal muscle, heart and brain.

It is found in the membrane. Its function is as follows. Probable subunit of the gamma-secretase complex, an endoprotease complex that catalyzes the intramembrane cleavage of integral proteins such as Notch receptors and APP (amyloid-beta precursor protein). It probably represents a stabilizing cofactor for the presenilin homodimer that promotes the formation of a stable complex. Probably present in a minority of gamma-secretase complexes compared to APH1A. This chain is Gamma-secretase subunit APH-1B (APH1B), found in Homo sapiens (Human).